The following is a 210-amino-acid chain: N-(5'-phosphoribosyl)anthranilate isomerase (210 aa).

The protein belongs to the TrpF family.

It carries out the reaction N-(5-phospho-beta-D-ribosyl)anthranilate = 1-(2-carboxyphenylamino)-1-deoxy-D-ribulose 5-phosphate. Its pathway is amino-acid biosynthesis; L-tryptophan biosynthesis; L-tryptophan from chorismate: step 3/5. The polypeptide is N-(5'-phosphoribosyl)anthranilate isomerase (Magnetococcus marinus (strain ATCC BAA-1437 / JCM 17883 / MC-1)).